Reading from the N-terminus, the 393-residue chain is Phospho-N-acetylmuramoyl-pentapeptide-transferase (393 aa).

10 helical membrane-spanning segments follow: residues 29-49 (RAVM…PWVI), 75-95 (TPTM…LLWF), 101-121 (FVWV…VDDW), 138-158 (YLWQ…SVSE), 194-214 (VSYP…IVGA), 226-246 (GLAI…AYVT), 263-283 (AGEL…FLWF), 290-310 (VFMG…IAVI), 315-335 (IVLG…MAQV), and 370-390 (QVVV…LSTL).

It belongs to the glycosyltransferase 4 family. MraY subfamily. The cofactor is Mg(2+).

Its subcellular location is the cell inner membrane. It catalyses the reaction UDP-N-acetyl-alpha-D-muramoyl-L-alanyl-gamma-D-glutamyl-meso-2,6-diaminopimeloyl-D-alanyl-D-alanine + di-trans,octa-cis-undecaprenyl phosphate = di-trans,octa-cis-undecaprenyl diphospho-N-acetyl-alpha-D-muramoyl-L-alanyl-D-glutamyl-meso-2,6-diaminopimeloyl-D-alanyl-D-alanine + UMP. Its pathway is cell wall biogenesis; peptidoglycan biosynthesis. Catalyzes the initial step of the lipid cycle reactions in the biosynthesis of the cell wall peptidoglycan: transfers peptidoglycan precursor phospho-MurNAc-pentapeptide from UDP-MurNAc-pentapeptide onto the lipid carrier undecaprenyl phosphate, yielding undecaprenyl-pyrophosphoryl-MurNAc-pentapeptide, known as lipid I. In Leptothrix cholodnii (strain ATCC 51168 / LMG 8142 / SP-6) (Leptothrix discophora (strain SP-6)), this protein is Phospho-N-acetylmuramoyl-pentapeptide-transferase.